The sequence spans 276 residues: Glutamate 5-kinase (276 aa).

Residue lysine 14 participates in ATP binding. Substrate is bound by residues serine 54, aspartate 141, and asparagine 157. ATP is bound by residues 177–178 and 219–225; these read SD and TGGMLTK.

The protein belongs to the glutamate 5-kinase family.

It is found in the cytoplasm. It catalyses the reaction L-glutamate + ATP = L-glutamyl 5-phosphate + ADP. The protein operates within amino-acid biosynthesis; L-proline biosynthesis; L-glutamate 5-semialdehyde from L-glutamate: step 1/2. Catalyzes the transfer of a phosphate group to glutamate to form L-glutamate 5-phosphate. This chain is Glutamate 5-kinase, found in Listeria welshimeri serovar 6b (strain ATCC 35897 / DSM 20650 / CCUG 15529 / CIP 8149 / NCTC 11857 / SLCC 5334 / V8).